The following is a 1167-amino-acid chain: DNA-directed RNA polymerase subunit beta (1167 aa).

The disordered stretch occupies residues 1-27 (MAVSPANQATAATTSAESRSEATGIPG). A compositionally biased stretch (low complexity) spans 9–23 (ATAATTSAESRSEAT).

It belongs to the RNA polymerase beta chain family. In terms of assembly, the RNAP catalytic core consists of 2 alpha, 1 beta, 1 beta' and 1 omega subunit. When a sigma factor is associated with the core the holoenzyme is formed, which can initiate transcription.

It carries out the reaction RNA(n) + a ribonucleoside 5'-triphosphate = RNA(n+1) + diphosphate. DNA-dependent RNA polymerase catalyzes the transcription of DNA into RNA using the four ribonucleoside triphosphates as substrates. The chain is DNA-directed RNA polymerase subunit beta from Amycolatopsis mediterranei (strain S699) (Nocardia mediterranei).